The primary structure comprises 330 residues: Src kinase-associated phosphoprotein 2-A (330 aa).

The interval 53–77 (QDFQDKAETDDQEENDGFSLPPDAV) is disordered. Positions 105–208 (DYLRAGYLEK…WINVIMNARG (104 aa)) constitute a PH domain. A disordered region spans residues 228–261 (SHEEDIYEELPEESEKPVTGSETPKATPVPVNNT). Residues 247–261 (GSETPKATPVPVNNT) show a composition bias toward polar residues. Positions 268–329 (DYANFYRGLW…PKAYIIEMYD (62 aa)) constitute an SH3 domain.

Belongs to the SKAP family. Phosphorylated on tyrosines.

The protein localises to the cytoplasm. Its function is as follows. May be involved in B-cell and macrophage adhesion processes. May play a role in src signaling pathway. The chain is Src kinase-associated phosphoprotein 2-A (skap2-a) from Xenopus laevis (African clawed frog).